Consider the following 386-residue polypeptide: Delta(7)-sterol 5(6)-desaturase (386 aa).

A run of 3 helical transmembrane segments spans residues 119–139 (VLSL…IVAY), 172–192 (IPVM…GYSF), and 206–226 (AILW…YFLH). The region spanning 214–337 (FILFTDCGIY…FTTLWDRLGN (124 aa)) is the Fatty acid hydroxylase domain. The Histidine box-1 motif lies at 226–230 (HRWLH). Residues 239–243 (HKPHH) carry the Histidine box-2 motif. A helical membrane pass occupies residues 272–292 (PLLFPLHKVLYLLLFTFVNFW). The short motif at 314-318 (HTVHH) is the Histidine box-3 element.

The protein belongs to the sterol desaturase family. The cofactor is Fe cation.

The protein localises to the endoplasmic reticulum membrane. The catalysed reaction is a Delta(7)-sterol + 2 Fe(II)-[cytochrome b5] + O2 + 2 H(+) = a Delta(5),Delta(7)-sterol + 2 Fe(III)-[cytochrome b5] + 2 H2O. It functions in the pathway steroid metabolism; ergosterol biosynthesis; ergosterol from zymosterol: step 3/5. Catalyzes the introduction of a C-5 double bond in the B ring of ergosterol. May contribute to the regulation of ergosterol biosynthesis. This chain is Delta(7)-sterol 5(6)-desaturase (ERG3), found in Candida dubliniensis (strain CD36 / ATCC MYA-646 / CBS 7987 / NCPF 3949 / NRRL Y-17841) (Yeast).